Reading from the N-terminus, the 81-residue chain is MRFLALTSLLCILLLCLSFFSAEGRRHPRNPAKPGKIRICCPRLPGPDLMPQKGHHMRICRPCKFKQKPQLWVVPGALPQV.

Residues 1-24 form the signal peptide; that stretch reads MRFLALTSLLCILLLCLSFFSAEG. Cystine bridges form between Cys-40-Cys-63 and Cys-41-Cys-60.

As to quaternary structure, interacts with SUSD2; the interaction is direct.

The protein resides in the secreted. Functionally, highly cationic protein that has multiple functions. Acts as a chemotactic factor that mediates lymphocytes recruitment to epithelia through binding and activation of the G-protein coupled receptor GPR15. May be a tumor suppressor; together with SUSD2 has a growth inhibitory effect on colon cancer cells which includes G1 cell cycle arrest. May regulate keratinocyte proliferation. In addition, through activation of Mas-related G protein-coupled receptors (MRGPRs) contributes to pruritogenesis by activating itch-selective sensory neurons and mast cells degranulation. Its function is as follows. Has antimicrobial activity against Gram-positive bacteria, including Staphylococcus aureus and Actinomyces spec., and Mycoplasma hominis and lentivirus. This Sus scrofa (Pig) protein is Protein GPR15LG (GPR15LG).